The following is a 608-amino-acid chain: Histone-arginine methyltransferase CARM1 (608 aa).

Ala-2 bears the N-acetylalanine mark. The interaction with C9orf72 stretch occupies residues 27–138 (ATVSVFPGAR…GHTLERSVFS (112 aa)). In terms of domain architecture, SAM-dependent MTase PRMT-type spans 146–453 (AVQYFQFYGY…KRQSYDISIV (308 aa)). S-adenosyl-L-methionine contacts are provided by Gln-159, Arg-168, Gly-192, and Glu-214. Ser-216 carries the post-translational modification Phosphoserine. Lys-227 is covalently cross-linked (Glycyl lysine isopeptide (Lys-Gly) (interchain with G-Cter in ubiquitin)). Glu-243 and Ser-271 together coordinate S-adenosyl-L-methionine. Positions 346-379 (RILMAKSVKYTVNFLEAKEGDLHRIEIPFKFHML) are required for nuclear translocation. Positions 499-608 (TGSTYNLSSG…IPTNTMHYGS (110 aa)) are transactivation domain. Arg-550 carries the dimethylated arginine modification.

Belongs to the class I-like SAM-binding methyltransferase superfamily. Protein arginine N-methyltransferase family. Homodimer. Interacts with NR1H4. Interacts with SNRPC. Interacts with the C-terminus of NCOA2/GRIP1, NCO3/ACTR and NCOA1/SRC1. Part of a complex consisting of CARM1, EP300/P300 and NCOA2/GRIP1. Interacts with FLII, TP53, myogenic factor MEF2, EP300/P300, TRIM24, CREBBP and CTNNB1. Interacts with RELA. Identified in a complex containing CARM1, TRIM24 and NCOA2/GRIP1. Interacts with NCOA3/SRC3. Interacts with SKP2. Interacts (via PH domain-like fold) with C9orf72. Interacts with PARP1; promoting PARP1 recruimtent to replication forks. In terms of assembly, (Microbial infection) Interacts with HTLV-1 protein Tax. Post-translationally, auto-methylated on Arg-550. Methylation enhances transcription coactivator activity. Methylation is required for its role in the regulation of pre-mRNA alternative splicing. Phosphorylation at Ser-216 is strongly increased during mitosis, and decreases rapidly to a very low, basal level after entry into the G1 phase of the cell cycle. Phosphorylation at Ser-216 may promote location in the cytosol. Phosphorylation at Ser-216 interferes with S-adenosyl-L-methionine binding and strongly reduces methyltransferase activity. In terms of processing, ubiquitinated by E3 ubiquitin-protein ligase complex containing FBXO9 at Lys-227; leading to proteasomal degradation. As to expression, overexpressed in prostate adenocarcinomas and high-grade prostatic intraepithelial neoplasia.

The protein localises to the nucleus. It localises to the cytoplasm. Its subcellular location is the chromosome. It catalyses the reaction L-arginyl-[protein] + 2 S-adenosyl-L-methionine = N(omega),N(omega)-dimethyl-L-arginyl-[protein] + 2 S-adenosyl-L-homocysteine + 2 H(+). With respect to regulation, methylation of H3R17 (H3R17me) by CARM1 is stimulated by preacetylation of H3 'Lys-18' (H3K18ac) H3 'Lys-23' (H3K23ac) by EP300 and blocked by citrullination of H3 'Arg-17' (H3R17ci) by PADI4. In terms of biological role, methylates (mono- and asymmetric dimethylation) the guanidino nitrogens of arginyl residues in several proteins involved in DNA packaging, transcription regulation, pre-mRNA splicing, and mRNA stability. Recruited to promoters upon gene activation together with histone acetyltransferases from EP300/P300 and p160 families, methylates histone H3 at 'Arg-17' (H3R17me), forming mainly asymmetric dimethylarginine (H3R17me2a), leading to activation of transcription via chromatin remodeling. During nuclear hormone receptor activation and TCF7L2/TCF4 activation, acts synergically with EP300/P300 and either one of the p160 histone acetyltransferases NCOA1/SRC1, NCOA2/GRIP1 and NCOA3/ACTR or CTNNB1/beta-catenin to activate transcription. During myogenic transcriptional activation, acts together with NCOA3/ACTR as a coactivator for MEF2C. During monocyte inflammatory stimulation, acts together with EP300/P300 as a coactivator for NF-kappa-B. Acts as a coactivator for PPARG, promotes adipocyte differentiation and the accumulation of brown fat tissue. Plays a role in the regulation of pre-mRNA alternative splicing by methylation of splicing factors. Also seems to be involved in p53/TP53 transcriptional activation. Methylates EP300/P300, both at 'Arg-2142', which may loosen its interaction with NCOA2/GRIP1, and at 'Arg-580' and 'Arg-604' in the KIX domain, which impairs its interaction with CREB and inhibits CREB-dependent transcriptional activation. Also methylates arginine residues in RNA-binding proteins PABPC1, ELAVL1 and ELAV4, which may affect their mRNA-stabilizing properties and the half-life of their target mRNAs. Acts as a transcriptional coactivator of ACACA/acetyl-CoA carboxylase by enriching H3R17 methylation at its promoter, thereby positively regulating fatty acid synthesis. Independently of its methyltransferase activity, involved in replication fork progression: promotes PARP1 recruitment to replication forks, leading to poly-ADP-ribosylation of chromatin at replication forks and reduced fork speed. This is Histone-arginine methyltransferase CARM1 (CARM1) from Homo sapiens (Human).